We begin with the raw amino-acid sequence, 342 residues long: Protein FinQ (342 aa).

The H-T-H motif DNA-binding region spans 208-227 (RDREFNLLNAQISMVLYICS).

In terms of biological role, transcriptional inhibitor of the F plasmid transfer genes. FinQ may regulate a gene or genes encoded on the IncI plasmids, and coincidentally may inhibit F transfer when coresident. This Escherichia coli protein is Protein FinQ (finQ).